The chain runs to 155 residues: Methylated-DNA--protein-cysteine methyltransferase (155 aa).

The active-site Nucleophile; methyl group acceptor is the Cys-119.

It belongs to the MGMT family.

The protein localises to the cytoplasm. It carries out the reaction a 6-O-methyl-2'-deoxyguanosine in DNA + L-cysteinyl-[protein] = S-methyl-L-cysteinyl-[protein] + a 2'-deoxyguanosine in DNA. The catalysed reaction is a 4-O-methyl-thymidine in DNA + L-cysteinyl-[protein] = a thymidine in DNA + S-methyl-L-cysteinyl-[protein]. In terms of biological role, involved in the cellular defense against the biological effects of O6-methylguanine (O6-MeG) and O4-methylthymine (O4-MeT) in DNA. Repairs the methylated nucleobase in DNA by stoichiometrically transferring the methyl group to a cysteine residue in the enzyme. This is a suicide reaction: the enzyme is irreversibly inactivated. This chain is Methylated-DNA--protein-cysteine methyltransferase, found in Sulfolobus acidocaldarius (strain ATCC 33909 / DSM 639 / JCM 8929 / NBRC 15157 / NCIMB 11770).